The sequence spans 513 residues: Calcium-binding mitochondrial carrier protein SCaMC-2 (513 aa).

Over Met-1 to His-233 the chain is Mitochondrial intermembrane. EF-hand domains lie at Glu-55–His-90, Arg-91–Glu-124, Asp-122–Asn-157, and Ile-158–Glu-193. Residues Asp-68, Asn-70, Asp-72, Asp-79, Asp-104, Asp-106, Asp-108, Gln-110, and Glu-115 each coordinate Ca(2+). Solcar repeat units lie at residues Gly-228–Ile-314, Leu-322–Ala-407, and Pro-419–Thr-507. The helical transmembrane segment at Leu-234–Leu-251 threads the bilayer. The Mitochondrial matrix portion of the chain corresponds to Asp-252–Arg-288. The chain crosses the membrane as a helical span at residues Gly-289–Tyr-308. Topologically, residues Glu-309 to Gly-331 are mitochondrial intermembrane. Residues Ser-332–Met-345 traverse the membrane as a helical segment. Topologically, residues Glu-346–Lys-381 are mitochondrial matrix. Residues Gly-382 to Tyr-401 form a helical membrane-spanning segment. Over Glu-402–Leu-424 the chain is Mitochondrial intermembrane. The chain crosses the membrane as a helical span at residues Leu-425–Leu-442. At Ala-443–Arg-481 the chain is on the mitochondrial matrix side. A helical transmembrane segment spans residues Gly-482–Tyr-501. The Mitochondrial intermembrane portion of the chain corresponds to Glu-502–Arg-513.

Belongs to the mitochondrial carrier (TC 2.A.29) family.

The protein localises to the mitochondrion inner membrane. Calcium-dependent mitochondrial solute carrier. This chain is Calcium-binding mitochondrial carrier protein SCaMC-2 (slc25a25), found in Xenopus tropicalis (Western clawed frog).